The chain runs to 876 residues: Phosphoenolpyruvate carboxylase (876 aa).

Active-site residues include H138 and K543.

It belongs to the PEPCase type 1 family. Mg(2+) serves as cofactor.

The catalysed reaction is oxaloacetate + phosphate = phosphoenolpyruvate + hydrogencarbonate. Functionally, forms oxaloacetate, a four-carbon dicarboxylic acid source for the tricarboxylic acid cycle. The chain is Phosphoenolpyruvate carboxylase from Vibrio atlanticus (strain LGP32) (Vibrio splendidus (strain Mel32)).